The chain runs to 65 residues: Beta-defensin 17 (65 aa).

An N-terminal signal peptide occupies residues 1–19; that stretch reads MKFHLLFFILLFSITILTG. 3 cysteine pairs are disulfide-bonded: C35/C63, C42/C56, and C46/C64.

The protein belongs to the beta-defensin family.

The protein resides in the secreted. Functionally, has antibacterial activity. The protein is Beta-defensin 17 (Defb17) of Rattus norvegicus (Rat).